The chain runs to 354 residues: 3-dehydroquinate synthase (354 aa).

NAD(+) is bound by residues aspartate 39, tyrosine 45, glutamate 68–lysine 71, glycine 100–aspartate 104, threonine 124–threonine 125, lysine 136, lysine 145, and phenylalanine 163–threonine 166. 3 residues coordinate Zn(2+): glutamate 178, histidine 242, and histidine 256.

This sequence belongs to the sugar phosphate cyclases superfamily. Dehydroquinate synthase family. NAD(+) serves as cofactor. Co(2+) is required as a cofactor. It depends on Zn(2+) as a cofactor.

The protein resides in the cytoplasm. It catalyses the reaction 7-phospho-2-dehydro-3-deoxy-D-arabino-heptonate = 3-dehydroquinate + phosphate. It participates in metabolic intermediate biosynthesis; chorismate biosynthesis; chorismate from D-erythrose 4-phosphate and phosphoenolpyruvate: step 2/7. Its function is as follows. Catalyzes the conversion of 3-deoxy-D-arabino-heptulosonate 7-phosphate (DAHP) to dehydroquinate (DHQ). The polypeptide is 3-dehydroquinate synthase (Staphylococcus aureus (strain MRSA252)).